Consider the following 1960-residue polypeptide: MAQQAADKYLYVDKNFINNPLAQADWAAKKLVWVPSDKSGFEPASLKEEVGEEAIVELVENGKKVKVNKDDIQKMNPPKFSKVEDMAELTCLNEASVLHNLKEXYYSGLIYTYSGLFCVVINPYKNLPIYSEEIVEMYKGKKRHEMPPHIYAITDTAYRSMMQDREDQSILCTGESGAGKTENTKKVIQYLAHVASSHKSKKDQGELERQLLQANPILEAFGNAKTVKNDNSSRFGKFIRINFDVNGYIVGANIETYLLEKSRAIRQAKEERTFHIFYYLLSGAGEHLKTDLLLEPYNKYRFLSNGHVTIPGQQDKDMFQETMEAMRIMGIPEEEQMGLLRVISGVLQLGNIVFKKERNTDQASMPDNTAAQKVSHLLGINVTDFTRGILTPRIKVGRDYVQKAQTKEQADFAIEALAKATYERMFRWLVLRINKALDKTKRQGASFIGILDIAGFEIFDLNSFEQLCINYTNEKLQQLFNHTMFILEQEEYQREGIEWNFIDFGLDLQPCIDLIEKPAGPPGILALLDEECWFPKATDKSFVEKVVQEQGTHPKFQKPKQLKDKADFCIIHYAGKVDYKADEWLMKNMDPLNDNIATLLHQSSDKFVSELWKDVDRIIGLDQVAGMSETALPGAFKTRKGMFRTVGQLYKEQLAKLMATLRNTNPNFVRCIIPNHEKKAGKLDPHLVLDQLRCNGVLEGIRICRQGFPNRVVFQEFRQRYEILTPNSIPKGFMDGKQACVLMIKALELDSNLYRIGQSKVFFRAGVLAHLEEERDLKITDVIIGFQACCRGYLARKAFAKRQQQLTAMKVLQRNCAAYLKLRNWQWWRLFTKVKPLLQVSRQEEEMMAKEEELVKVREKQLAAENRLTEMETLQSQLMAEKLQLQEQLQAETELCAEAEELRARLTAKKQELEEICHDLEARVEEEEERCQHLQAEKKKMQQNIQELEEQLEEEESARQKLQLEKVTTEAKLKKLEEDQIIMEDQNCKLAKEKKLLEDRIAEFTTNLMEEEEKSKSLAKLKNKHEAMITDLEERLRREEKQRQELEKTRRKLEGDSTDLNDQIAELQAQIAELKMQLAKKEEELQAALARVEEEATQKNMALKKIRELESQISELQEDLESERASRNKAEKQKRDLGEELEALKTELEDTLDSTAAQQELRSKREQEVNILKKTLEEEARTHEAQIQEMRQKHSQAVEELAEQLEQTKRVKANLEKAKQTLENERGELANEVKVLQQGKGDSEHKRKKAEAQLQELQVKFTEGERVRTELADKVTKLQVELDNVMGLLTQSDSKSSKLTKDFSALESQLQDTQELLQEENRQKLSLSTKLKQMEDEKNSFKEQLEEEEEAKRNLEKQIATLHAQVTDMKKKMEDGVGCLETAEEAKRKLQKDLEGLGQRYEEKVAAYDKLEKTKTRLQQELDDLLVDLDHQRRTASNLEKKQKKFDQLLAEEKTISAKYAEERDRAEAEAREKETKALSLARALEEAMEQKAELERLNKQFRTEMEDLMSSKDDVGKSVHELEKSKRALEQQVEEMKTQLEELEDELQATEDAKLRLEVNLQAMKAQFERDLQGRDEQSEEKKKQLVRQVREMEAELEDEKKQRSMAVAARKKLEMDLKDLEAHIDSANKNRDEAIKQLRKLQAQMKDCVRELDDTRASREEILAQAKENEKKMKSMEAEMIQLQEELAAAERAKRQAQQERDELADEIANSSGKGALALEEKRRLEARIAQLEEELEEEQGNTELVNDRLKKANLQIDQINTDLNLERSHAQKNENARQQLERQNKELKVKLQEMEGTVKSKYKASITALEAKIAQLEEQLDNETKERQAACKQVRRAEKKLKDVLLQVDDERRNAEQFKDQADKASTRLKQLKRQLEEAEEEAQRANASRRKLQRELEDATETADAMNREVSSLKNKLRRGDLPFVVPRRVARKGAGDCSDEEVDGKADGAEAKAAE.

At Ala2 the chain carries N-acetylalanine. The segment at 2–838 is mediates interaction with LIMCH1; the sequence is AQQAADKYLY…RLFTKVKPLL (837 aa). Position 8 is an N6-acetyllysine (Lys8). A Phosphotyrosine modification is found at Tyr11. A Myosin N-terminal SH3-like domain is found at 27–77; it reads AAKKLVWVPSDKSGFEPASLKEEVGEEAIVELVENGKKVKVNKDDIQKMNP. Positions 81–776 constitute a Myosin motor domain; that stretch reads SKVEDMAELT…VLAHLEEERD (696 aa). Position 102 is an N6-acetyllysine (Lys102). 174-181 is an ATP binding site; sequence GESGAGKT. Lys299, Lys435, and Lys613 each carry N6-acetyllysine. Ser628 carries the post-translational modification Phosphoserine. Residues 654 to 676 are actin-binding; it reads LAKLMATLRNTNPNFVRCIIPNH. Tyr754 is subject to Phosphotyrosine. The IQ domain maps to 779-808; the sequence is ITDVIIGFQACCRGYLARKAFAKRQQQLTA. Positions 837 to 1926 form a coiled coil; it reads LLQVSRQEEE…LKNKLRRGDL (1090 aa). Position 850 is an N6-succinyllysine (Lys850). 3 positions are modified to N6-acetyllysine: Lys860, Lys975, and Lys1024. Phosphoserine is present on Ser1114. Residues 1117 to 1137 are disordered; it reads QEDLESERASRNKAEKQKRDL. Over residues 1122-1137 the composition is skewed to basic and acidic residues; the sequence is SERASRNKAEKQKRDL. Lys1234, Lys1249, Lys1357, Lys1392, Lys1404, Lys1410, Lys1459, and Lys1638 each carry N6-acetyllysine. Lys1669 is modified (N6-succinyllysine). Residue Ser1714 is modified to Phosphoserine. Lys1793, Lys1802, and Lys1845 each carry N6-acetyllysine. The segment at 1877–1918 is disordered; sequence RQLEEAEEEAQRANASRRKLQRELEDATETADAMNREVSSLK. The residue at position 1923 (Arg1923) is an Omega-N-methylarginine. Positions 1934–1960 are disordered; it reads VARKGAGDCSDEEVDGKADGAEAKAAE. Position 1943 is a phosphoserine (Ser1943). Residues 1948–1960 are compositionally biased toward basic and acidic residues; the sequence is DGKADGAEAKAAE.

It belongs to the TRAFAC class myosin-kinesin ATPase superfamily. Myosin family. In terms of assembly, myosin is a hexameric protein that consists of 2 heavy chain subunits (MHC), 2 alkali light chain subunits (MLC) and 2 regulatory light chain subunits (MLC-2). Interacts with RASIP1. Interacts with DDR1. Interacts with PDLIM2. Interacts with SVIL. Interacts with HTRA3. Interacts with Myo7a. Interacts with CFAP95. Interacts with LIMCH1; independently of the integration of MYH9 into the myosin complex. Interacts with RAB3A. Interacts with ZBED4. Interacts with S100A4; this interaction increases cell motility. In terms of processing, ISGylated. Post-translationally, ubiquitination.

It is found in the cytoplasm. The protein localises to the cytoskeleton. Its subcellular location is the cell cortex. It localises to the cytoplasmic vesicle. The protein resides in the secretory vesicle. It is found in the cortical granule. Its function is as follows. Cellular myosin that appears to play a role in cytokinesis, cell shape, and specialized functions such as secretion and capping. Required for cortical actin clearance prior to oocyte exocytosis. Promotes cell motility in conjunction with S100A4. During cell spreading, plays an important role in cytoskeleton reorganization, focal contact formation (in the margins but not the central part of spreading cells), and lamellipodial retraction; this function is mechanically antagonized by MYH10. This chain is Myosin-9 (MYH9), found in Canis lupus familiaris (Dog).